Reading from the N-terminus, the 803-residue chain is Na(+)/H(+) antiporter subunit A1 (803 aa).

The next 19 helical transmembrane spans lie at 1–21 (MSLL…IPIL), 30–50 (LGWF…SLIS), 79–99 (LSIL…LYSI), 117–137 (LFMG…LYLF), 166–186 (LIIT…ISLA), 208–228 (FIFA…QVPF), 265–285 (LFAI…ITLF), 300–320 (ILAF…GIGA), 337–357 (FTAA…LFMI), 377–397 (LTIM…MAGI), 427–447 (LGIV…VYSI), 472–492 (ILML…GLFP), 522–542 (GITP…LLLL), 591–611 (LVII…SVPF), 621–641 (IHIY…MVVI), 646–666 (LFSV…FVFF), 671–691 (LALT…LCFY), 707–727 (LTNA…GLIA), and 764–784 (MDTL…YTMI).

It belongs to the CPA3 antiporters (TC 2.A.63) subunit A family. May form a heterooligomeric complex that consists of seven subunits: mnhA1, mnhB1, mnhC1, mnhD1, mnhE1, mnhF1 and mnhG1.

It localises to the cell membrane. Its function is as follows. Mnh complex is a Na(+)/H(+) antiporter involved in Na(+) excretion. The sequence is that of Na(+)/H(+) antiporter subunit A1 (mnhA1) from Staphylococcus haemolyticus (strain JCSC1435).